A 599-amino-acid chain; its full sequence is Elongation factor 4 (599 aa).

In terms of domain architecture, tr-type G spans 4–186 (SKIRNFSIIA…SIVEKVPAPK (183 aa)). Residues 16 to 21 (DHGKST) and 133 to 136 (NKVD) each bind GTP.

This sequence belongs to the TRAFAC class translation factor GTPase superfamily. Classic translation factor GTPase family. LepA subfamily.

The protein localises to the cell inner membrane. The catalysed reaction is GTP + H2O = GDP + phosphate + H(+). Its function is as follows. Required for accurate and efficient protein synthesis under certain stress conditions. May act as a fidelity factor of the translation reaction, by catalyzing a one-codon backward translocation of tRNAs on improperly translocated ribosomes. Back-translocation proceeds from a post-translocation (POST) complex to a pre-translocation (PRE) complex, thus giving elongation factor G a second chance to translocate the tRNAs correctly. Binds to ribosomes in a GTP-dependent manner. The chain is Elongation factor 4 from Syntrophotalea carbinolica (strain DSM 2380 / NBRC 103641 / GraBd1) (Pelobacter carbinolicus).